A 324-amino-acid chain; its full sequence is Probable pectinesterase A (324 aa).

The signal sequence occupies residues 1-19; that stretch reads MHGSLLKLALLSFSLASSA. Residue glutamine 142 coordinates substrate. Residue aspartate 165 is the Proton donor of the active site. Residue aspartate 186 is the Nucleophile of the active site. Residues arginine 246 and tryptophan 248 each coordinate substrate. N-linked (GlcNAc...) asparagine glycosylation occurs at asparagine 285.

The protein belongs to the pectinesterase family.

Its subcellular location is the secreted. It carries out the reaction [(1-&gt;4)-alpha-D-galacturonosyl methyl ester](n) + n H2O = [(1-&gt;4)-alpha-D-galacturonosyl](n) + n methanol + n H(+). It participates in glycan metabolism; pectin degradation; 2-dehydro-3-deoxy-D-gluconate from pectin: step 1/5. Involved in maceration and soft-rotting of plant tissue. In Aspergillus flavus (strain ATCC 200026 / FGSC A1120 / IAM 13836 / NRRL 3357 / JCM 12722 / SRRC 167), this protein is Probable pectinesterase A (pmeA).